Here is a 450-residue protein sequence, read N- to C-terminus: Protein tweety homolog 1 (450 aa).

The Extracellular portion of the chain corresponds to 1–43 (MGAPPGYRPSAWVHLLHQLPRADFQLRPVPSGFAPRDQEYQQA). A helical transmembrane segment spans residues 44–64 (LLLVAALAGLGLGLSLIFIAV). Residues 65–88 (YLIRFCCCRPPEPHGAKSPPPGGG) are Cytoplasmic-facing. The helical transmembrane segment at 89–109 (CVTWSCIAALLVGCAGIGIGF) threads the bilayer. The Extracellular segment spans residues 110–214 (YGNSETSDGV…DVTFVEEYRW (105 aa)). The N-linked (GlcNAc...) asparagine glycan is linked to Asn-130. Residues 215–235 (LAYVLLLLLVLLVCLFTLLGL) traverse the membrane as a helical segment. At 236-240 (AKQSK) the chain is on the cytoplasmic side. A helical transmembrane segment spans residues 241 to 261 (WLVVVMTAMSLLVLVLSWGSM). Topologically, residues 262-390 (GLEAATAVGL…LRGLCEDALE (129 aa)) are extracellular. Disulfide bonds link Cys-275–Cys-385 and Cys-303–Cys-370. Asn-284 and Asn-355 each carry an N-linked (GlcNAc...) asparagine glycan. Residues 391–411 (GLLFLMLFSLLSAGALATTLC) traverse the membrane as a helical segment. Residues 412 to 450 (SLPRAWALFPPSDDYDDTDDDDPFNPQESKRFVQWQSSI) lie on the Cytoplasmic side of the membrane. Positions 428–450 (DTDDDDPFNPQESKRFVQWQSSI) are disordered. Ser-440 carries the post-translational modification Phosphoserine.

This sequence belongs to the tweety family. In terms of assembly, homotetramer; disulfide-linked. Homodimer. In terms of processing, N-glycosylated. Contains high-mannose, hybrid and complex oligosaccharides. Expressed in the astrocytes (at protein level). Restricted mainly to neural tissues. Strongly expressed in brain and eye.

It localises to the cell membrane. It carries out the reaction chloride(in) = chloride(out). The catalysed reaction is L-glutamate(out) = L-glutamate(in). Its activity is regulated as follows. Inhibited by (4-[(2-butyl-6,7-dichloro-2- cyclopentyl-2,3-dihydro-1-oxo-1H-inden-5-yl)oxy]butanoic acid). Calcium-independent, swelling-dependent volume-regulated anion channel (VRAC-swell) which plays a pivotal role in the process of regulatory volume decrease (RVD) in the brain through the efflux of anions like chloride and organic osmolytes like glutamate. This chain is Protein tweety homolog 1 (Ttyh1), found in Mus musculus (Mouse).